The sequence spans 244 residues: Anti-H(O) lectin 1 (244 aa).

N-linked (GlcNAc...) asparagine glycans are attached at residues Asn-113 and Asn-117. Residues Glu-127 and Asp-129 each coordinate Mn(2+). Ca(2+) is bound by residues Asp-129, Tyr-131, Asn-137, and Asp-142. The Mn(2+) site is built by Asp-142 and His-145.

It belongs to the leguminous lectin family. Homotetramer.

Its function is as follows. Di-N-acetylchitobiose-binding anti-H(O) lectin. The polypeptide is Anti-H(O) lectin 1 (Cytisophyllum sessilifolium (Sessile-leaved cytisus)).